The sequence spans 647 residues: Acetyl-coenzyme A synthetase (647 aa).

CoA contacts are provided by residues 190–193, Thr310, and Asn334; that span reads RGGK. ATP contacts are provided by residues 386-388, 410-415, Asp499, and Arg514; these read GEP and DTWWQT. CoA is bound at residue Ser522. Arg525 contributes to the ATP binding site. Val536, His538, and Val541 together coordinate Mg(2+). Arg583 provides a ligand contact to CoA. N6-acetyllysine is present on Lys608.

The protein belongs to the ATP-dependent AMP-binding enzyme family. The cofactor is Mg(2+). Acetylated. Deacetylation by the SIR2-homolog deacetylase activates the enzyme.

The catalysed reaction is acetate + ATP + CoA = acetyl-CoA + AMP + diphosphate. In terms of biological role, catalyzes the conversion of acetate into acetyl-CoA (AcCoA), an essential intermediate at the junction of anabolic and catabolic pathways. AcsA undergoes a two-step reaction. In the first half reaction, AcsA combines acetate with ATP to form acetyl-adenylate (AcAMP) intermediate. In the second half reaction, it can then transfer the acetyl group from AcAMP to the sulfhydryl group of CoA, forming the product AcCoA. The chain is Acetyl-coenzyme A synthetase from Xanthomonas oryzae pv. oryzae (strain MAFF 311018).